Consider the following 218-residue polypeptide: Small ribosomal subunit protein uS3 (218 aa).

The KH type-2 domain occupies 38–106 (IRTFLKKKLY…KLVVDIKEVK (69 aa)).

It belongs to the universal ribosomal protein uS3 family. In terms of assembly, part of the 30S ribosomal subunit. Forms a tight complex with proteins S10 and S14.

Functionally, binds the lower part of the 30S subunit head. Binds mRNA in the 70S ribosome, positioning it for translation. The sequence is that of Small ribosomal subunit protein uS3 from Agathobacter rectalis (strain ATCC 33656 / DSM 3377 / JCM 17463 / KCTC 5835 / VPI 0990) (Eubacterium rectale).